The chain runs to 433 residues: Histidine--tRNA ligase (433 aa).

It belongs to the class-II aminoacyl-tRNA synthetase family. Homodimer.

The protein resides in the cytoplasm. The catalysed reaction is tRNA(His) + L-histidine + ATP = L-histidyl-tRNA(His) + AMP + diphosphate + H(+). This is Histidine--tRNA ligase from Blochmanniella floridana.